Reading from the N-terminus, the 294-residue chain is Tyrosine recombinase XerC (294 aa).

In terms of domain architecture, Core-binding (CB) spans 1-85; sequence MSRLVEDFFA…ACRGFYTWLV (85 aa). A Tyr recombinase domain is found at 106 to 283; sequence KLPRILDADE…DFQYLSKVYD (178 aa). Residues Arg145, Lys169, His235, Arg238, and His261 contribute to the active site. Tyr270 (O-(3'-phospho-DNA)-tyrosine intermediate) is an active-site residue.

Belongs to the 'phage' integrase family. XerC subfamily. As to quaternary structure, forms a cyclic heterotetrameric complex composed of two molecules of XerC and two molecules of XerD.

The protein resides in the cytoplasm. Its function is as follows. Site-specific tyrosine recombinase, which acts by catalyzing the cutting and rejoining of the recombining DNA molecules. The XerC-XerD complex is essential to convert dimers of the bacterial chromosome into monomers to permit their segregation at cell division. It also contributes to the segregational stability of plasmids. This chain is Tyrosine recombinase XerC, found in Xylella fastidiosa (strain M23).